Consider the following 433-residue polypeptide: Serine/threonine-protein kinase STK11 (433 aa).

A Phosphoserine modification is found at Ser31. An N6-acetyllysine mark is found at Lys44 and Lys48. A sufficient for interaction with SIRT1 region spans residues 45–90 (LIGKYLMGDLLGEGSYGKVKEVLDSETLCRRAVKILKKKKLRRIPN). Positions 49 to 309 (YLMGDLLGEG…IRQIRQHSWF (261 aa)) constitute a Protein kinase domain. ATP is bound by residues 55 to 63 (LGEGSYGKV) and Lys78. 2 positions are modified to N6-acetyllysine: Lys96 and Lys97. The active-site Proton acceptor is Asp176. The residue at position 189 (Thr189) is a Phosphothreonine; by autocatalysis. N6-acetyllysine is present on residues Lys296 and Lys311. The disordered stretch occupies residues 312–331 (KHPPAEAPVPIPPSPDTKDR). The span at 316 to 326 (AEAPVPIPPSP) shows a compositional bias: pro residues. Ser325 carries the post-translational modification Phosphoserine. Thr336 bears the Phosphothreonine; by autocatalysis mark. At Thr363 the chain carries Phosphothreonine; by ATM and autocatalysis. The disordered stretch occupies residues 397 to 433 (AAQLSTKSRAEGRAPNPARKACSASSKIRRLSACKQQ). Phosphoserine is present on residues Gln399 and Ser401. The residue at position 416 (Lys416) is an N6-acetyllysine. The S-palmitoyl cysteine moiety is linked to residue Cys418. Lys423 is modified (N6-acetyllysine). Residues 423–433 (KIRRLSACKQQ) are compositionally biased toward basic residues. Residue Ser428 is modified to Phosphoserine; by autocatalysis, PKA, PKC/PRKCZ and RPS6KA1. Position 430 is a cysteine methyl ester (Cys430). A lipid anchor (S-farnesyl cysteine) is attached at Cys430. Lys431 carries the N6-acetyllysine modification. Residues 431–433 (KQQ) constitute a propeptide, removed in mature form.

Belongs to the protein kinase superfamily. CAMK Ser/Thr protein kinase family. LKB1 subfamily. Catalytic component of a trimeric complex composed of STK11/LKB1, STRAD (STRADA or STRADB) and CAB39/MO25 (CAB39/MO25alpha or CAB39L/MO25beta): the complex tethers STK11/LKB1 in the cytoplasm and stimulates its catalytic activity. Found in a ternary complex composed of SMAD4, STK11/LKB1 and STK11IP. Interacts with p53/TP53, SMAD4, STK11IP and WDR6. Interacts with NR4A1. Interacts with NISCH; this interaction may increase STK11 activity. Interacts with PTEN; leading to PTEN phosphorylation. Interacts with SIRT1; the interaction deacetylates STK11. Interacts with CDKN1A. Requires Mg(2+) as cofactor. The cofactor is Mn(2+). Phosphorylated by ATM at Thr-363 following ionizing radiation (IR). Phosphorylation at Ser-428 by RPS6KA1 and/or some PKA is required to inhibit cell growth. Phosphorylation at Ser-428 is also required during neuronal polarization to mediate phosphorylation of BRSK1 and BRSK2. Phosphorylation by PKC/PRKCZ at Ser-399 in isoform 2 promotes metformin (or peroxynitrite)-induced nuclear export of STK11 and activation of AMPK. UV radiation-induced phosphorylation at Thr-363 mediates CDKN1A degradation. In terms of processing, acetylated. Deacetylation at Lys-48 enhances cytoplasmic localization and kinase activity in vitro. As to expression, ubiquitously expressed. Strongest expression in testis and fetal liver.

The protein resides in the nucleus. Its subcellular location is the cytoplasm. It localises to the membrane. It is found in the mitochondrion. It catalyses the reaction L-seryl-[protein] + ATP = O-phospho-L-seryl-[protein] + ADP + H(+). It carries out the reaction L-threonyl-[protein] + ATP = O-phospho-L-threonyl-[protein] + ADP + H(+). Activated by forming a complex with STRAD (STRADA or STRADB) and CAB39/MO25 (CAB39/MO25alpha or CAB39L/MO25beta): STRADA (or STRADB)-binding promotes a conformational change of STK11/LKB1 in an active conformation, which is stabilized by CAB39/MO25alpha (or CAB39L/MO25beta) interacting with the STK11/LKB1 activation loop. Sequestration in the nucleus by NR4A1 prevents it from phosphorylating and activating cytoplasmic AMPK. Its function is as follows. Tumor suppressor serine/threonine-protein kinase that controls the activity of AMP-activated protein kinase (AMPK) family members, thereby playing a role in various processes such as cell metabolism, cell polarity, apoptosis and DNA damage response. Acts by phosphorylating the T-loop of AMPK family proteins, thus promoting their activity: phosphorylates PRKAA1, PRKAA2, BRSK1, BRSK2, MARK1, MARK2, MARK3, MARK4, NUAK1, NUAK2, SIK1, SIK2, SIK3 and SNRK but not MELK. Also phosphorylates non-AMPK family proteins such as STRADA, PTEN and possibly p53/TP53. Acts as a key upstream regulator of AMPK by mediating phosphorylation and activation of AMPK catalytic subunits PRKAA1 and PRKAA2 and thereby regulates processes including: inhibition of signaling pathways that promote cell growth and proliferation when energy levels are low, glucose homeostasis in liver, activation of autophagy when cells undergo nutrient deprivation, and B-cell differentiation in the germinal center in response to DNA damage. Also acts as a regulator of cellular polarity by remodeling the actin cytoskeleton. Required for cortical neuron polarization by mediating phosphorylation and activation of BRSK1 and BRSK2, leading to axon initiation and specification. Involved in DNA damage response: interacts with p53/TP53 and recruited to the CDKN1A/WAF1 promoter to participate in transcription activation. Able to phosphorylate p53/TP53; the relevance of such result in vivo is however unclear and phosphorylation may be indirect and mediated by downstream STK11/LKB1 kinase NUAK1. Also acts as a mediator of p53/TP53-dependent apoptosis via interaction with p53/TP53: translocates to the mitochondrion during apoptosis and regulates p53/TP53-dependent apoptosis pathways. Regulates UV radiation-induced DNA damage response mediated by CDKN1A. In association with NUAK1, phosphorylates CDKN1A in response to UV radiation and contributes to its degradation which is necessary for optimal DNA repair. Has a role in spermiogenesis. The protein is Serine/threonine-protein kinase STK11 of Homo sapiens (Human).